Consider the following 704-residue polypeptide: Elongation factor G (704 aa).

A tr-type G domain is found at 8–290; the sequence is ARYRNIGISA…AVIDYLPAPT (283 aa). Residues 17–24, 88–92, and 142–145 contribute to the GTP site; these read AHIDAGKT, DTPGH, and NKMD.

Belongs to the TRAFAC class translation factor GTPase superfamily. Classic translation factor GTPase family. EF-G/EF-2 subfamily.

It localises to the cytoplasm. Functionally, catalyzes the GTP-dependent ribosomal translocation step during translation elongation. During this step, the ribosome changes from the pre-translocational (PRE) to the post-translocational (POST) state as the newly formed A-site-bound peptidyl-tRNA and P-site-bound deacylated tRNA move to the P and E sites, respectively. Catalyzes the coordinated movement of the two tRNA molecules, the mRNA and conformational changes in the ribosome. The polypeptide is Elongation factor G (Pectobacterium atrosepticum (strain SCRI 1043 / ATCC BAA-672) (Erwinia carotovora subsp. atroseptica)).